The primary structure comprises 409 residues: Failed axon connections homolog (409 aa).

The helical transmembrane segment at 68-88 threads the bilayer; sequence YLTGGALLAAAAYLLHELLVI. The interval 372-409 is disordered; that stretch reads DEGAENSFSRTPDTDFTGHSLFDSDVDMDDYTDHEQCK.

It belongs to the FAX family.

The protein localises to the membrane. Its function is as follows. May play a role in axonal development. The polypeptide is Failed axon connections homolog (FAXC) (Homo sapiens (Human)).